A 460-amino-acid chain; its full sequence is MQGHHQNHHQHLSSSSATSSHGNFMNKDGYDIGEIDPSLFLYLDGQGHHDPPSTAPSPLHHHHTTQNLAMRPPTSTLNIFPSQPMHIEPPPSSTHNTDNTRLVPAAQPSGSTRPASDPSMDLTNHSQFHQPPQGSKSIKKEGNRKGLASSDHDIPKSSDPKTLRRLAQNREAARKSRLRKKAYVQQLESCRIKLTQLEQEIQRARSQGVFFGGSLIGGDQQQGGLPIGPGNISSEAAVFDMEYARWLEEQQRLLNELRVATQEHLSENELRMFVDTCLAHYDHLINLKAMVAKTDVFHLISGAWKTPAERCFLWMGGFRPSEIIKVIVNQIEPLTEQQIVGICGLQQSTQEAEEALSQGLEALNQSLSDSIVSDSLPPASAPLPPHLSNFMSHMSLALNKLSALEGFVLQADNLRHQTIHRLNQLLTTRQEARCLLAVAEYFHRLQALSSLWLARPRQDG.

Basic residues predominate over residues 1–11 (MQGHHQNHHQH). Disordered regions lie at residues 1–29 (MQGHHQNHHQHLSSSSATSSHGNFMNKDG) and 43–163 (LDGQ…PKTL). Residues 12–21 (LSSSSATSSH) are compositionally biased toward low complexity. Composition is skewed to polar residues over residues 65–81 (TQNLAMRPPTSTLNIFP) and 121–136 (DLTNHSQFHQPPQGSK). Residues 138-162 (IKKEGNRKGLASSDHDIPKSSDPKT) show a composition bias toward basic and acidic residues. Residues 159 to 203 (DPKTLRRLAQNREAARKSRLRKKAYVQQLESCRIKLTQLEQEIQR) form the bZIP domain. The segment at 161-181 (KTLRRLAQNREAARKSRLRKK) is basic motif. Positions 163 to 170 (LRRLAQNR) match the Nuclear localization signal motif. Residues 187–201 (LESCRIKLTQLEQEI) are leucine-zipper. Positions 236 to 455 (AAVFDMEYAR…QALSSLWLAR (220 aa)) constitute a DOG1 domain.

It belongs to the bZIP family. In terms of assembly, homodimer. Binds DNA as a dimer. Interacts with floral glutaredoxins GRXC7/ROXY1 and GRXC8/ROXY2 in the nucleus. Interacts with TGA1, TGA2, TGA3, TGA4, TGA5, TGA6, TGA7, TGA9 and PAN. In terms of tissue distribution, expressed at low levels in inflorescence apex and flowers.

It localises to the nucleus. Its function is as follows. Together with TGA9, basic leucine-zipper transcription factor required for anther development, probably via the activation of SPL expression in anthers and via the regulation of genes with functions in early and middle tapetal development. Required for signaling responses to pathogen-associated molecular patterns (PAMPs) such as flg22 that involves chloroplastic reactive oxygen species (ROS) production and subsequent expression of H(2)O(2)-responsive genes. This Arabidopsis thaliana (Mouse-ear cress) protein is Transcription factor TGA10.